The sequence spans 162 residues: Probable chemoreceptor glutamine deamidase CheD (162 aa).

It belongs to the CheD family.

It carries out the reaction L-glutaminyl-[protein] + H2O = L-glutamyl-[protein] + NH4(+). Its function is as follows. Probably deamidates glutamine residues to glutamate on methyl-accepting chemotaxis receptors (MCPs), playing an important role in chemotaxis. In Clostridium novyi (strain NT), this protein is Probable chemoreceptor glutamine deamidase CheD.